Here is a 649-residue protein sequence, read N- to C-terminus: MKYSIPATPSGTTHAHVAIVGMGPRGTSALERLCASATDFLAPGARLTVHVVDPSPPGAGRVWRTAQSSELLMNTVTSQVTLYTDKSVVCSGPIREGPSLYEWATDAKLGLGPDEYPTRAQYGHYLEWVFREVVRNAPTGVEIEVHAARAVSLDDAPDGRQTLTLSTGRTLSGLSAVVLAQGHLPLVADAQLQQLTAYADQNGLRHITPSNPADVDLSSLKPGEPVFLRGLGLNFFDYMALLTTGRGGRFSRTPNGLRYHPSGREPRMYAGSRRGIPYQARGDNAKGAYGRHMPLIFTEEVIDGFRQRADSGNAPNFLKEIWPLVSKEVETVYYEALLRQHGFELGDFRDRFLATAHKSLEEAQVLTDFGITEENRWSWDRISRPYGERTFTAGAWRDWMLEYLREDAKEASLGNVNGPLKAALDVMRDLRNELRLIVDHAGLSGLSHRDHLDRWYTPLNAFLSIGPPRQRIEQMIALIEAGILDVLGPRPQARAEDGAWTVYSPEVPGLKVRVTTLIEARLPEPSLRHTADELLSHLLKTGQCRPHTVDGYETGGLDITLSPYRIIDSQGRAHERRFAVGVPTEGVHWVTAAGARPGVNSVTLSDTDAVARAALSAAVSGNTAVERQTEVKAWPNVEVSEVTVLEVGV.

Belongs to the nitrosuccinic acid synthase family. The cofactor is FAD.

It carries out the reaction L-aspartate + 3 NADPH + 3 O2 + 2 H(+) = 2-nitrobutanedioate + 3 NADP(+) + 4 H2O. The protein operates within mycotoxin biosynthesis. Nitrosuccinic acid synthase; part of the gene cluster that mediates the biosynthesis of the deadly neurotoxic nitroalkane 3-nitropropanoic acid (3-NPA) that acts as an antimetabolite of succinate and irreversibly inhibits succinate dehydrogenase and disrupts mitochondrial oxidative phosphorylation. NpaA catalyzes the iterative oxidation of L-aspartic acid to nitrosuccinic acid (2-nitrobutanedioate). Alternative amino acid substrates such as L-glutamate and D-aspartate are not accepted by npaA as a substrate, showing the strict substrate specificity toward L-aspartate. The nitrosuccinic acid decarboxylase npaB then facilitates decarboxylation of Nitrosuccinic acid to produce 3-NPA. This Aspergillus oryzae (strain ATCC 42149 / RIB 40) (Yellow koji mold) protein is Nitrosuccinic acid synthase npaA.